The primary structure comprises 205 residues: tRNA (guanine-N(7)-)-methyltransferase (205 aa).

4 residues coordinate S-adenosyl-L-methionine: E36, E61, D88, and D109. Residue D109 is part of the active site. Residue K113 coordinates substrate. The tract at residues 115-120 is interaction with RNA; the sequence is RHEKRR. Residues D145 and 183-186 each bind substrate; that span reads TGYE.

Belongs to the class I-like SAM-binding methyltransferase superfamily. TrmB family.

It catalyses the reaction guanosine(46) in tRNA + S-adenosyl-L-methionine = N(7)-methylguanosine(46) in tRNA + S-adenosyl-L-homocysteine. Its pathway is tRNA modification; N(7)-methylguanine-tRNA biosynthesis. In terms of biological role, catalyzes the formation of N(7)-methylguanine at position 46 (m7G46) in tRNA. The protein is tRNA (guanine-N(7)-)-methyltransferase of Mycoplasmopsis agalactiae (strain NCTC 10123 / CIP 59.7 / PG2) (Mycoplasma agalactiae).